The primary structure comprises 233 residues: C-type lectin domain family 2 member D6 (233 aa).

A disordered region spans residues 1-45 (MPSSAHLQDSPPLLSRTLTQNEGQTSLRQSSSCGPSATSASESLS). Topologically, residues 1 to 73 (MPSSAHLQDS…GIILPESPAK (73 aa)) are cytoplasmic. Over residues 16 to 29 (RTLTQNEGQTSLRQ) the composition is skewed to polar residues. A compositionally biased stretch (low complexity) spans 30–43 (SSSCGPSATSASES). The chain crosses the membrane as a helical; Signal-anchor for type II membrane protein span at residues 74–94 (LLCCCAVIVVLSVAVVALSVA). Topologically, residues 95–233 (LSVKKTPQIS…KLNSYTSQCQ (139 aa)) are extracellular. Positions 119–230 (VGNKCYYFNE…ICSKLNSYTS (112 aa)) constitute a C-type lectin domain. N-linked (GlcNAc...) asparagine glycosylation occurs at asparagine 132.

The protein resides in the cell membrane. Its function is as follows. Lectin-type cell surface receptor. The sequence is that of C-type lectin domain family 2 member D6 (Clec2d6) from Rattus norvegicus (Rat).